We begin with the raw amino-acid sequence, 433 residues long: Tubulin epsilon and delta complex protein 2 (433 aa).

3 disordered regions span residues Thr-45–Pro-69, Thr-95–Gly-169, and Gln-326–Gly-345. Residues Lys-107–Ser-120 are compositionally biased toward polar residues. Ser-159 bears the Phosphoserine mark. A compositionally biased stretch (pro residues) spans Pro-327–Ala-339.

Interacts with TEDC1. Found in a complex with TEDC1, TEDC2, TUBE1 and TUBD1.

Its subcellular location is the cell projection. The protein localises to the cilium. It is found in the cytoplasm. The protein resides in the cytoskeleton. It localises to the microtubule organizing center. Its subcellular location is the centrosome. The protein localises to the centriole. Functionally, acts as a positive regulator of ciliary hedgehog signaling. Required for centriole stability. In Homo sapiens (Human), this protein is Tubulin epsilon and delta complex protein 2.